We begin with the raw amino-acid sequence, 1905 residues long: Tudor domain-containing 6-like (1905 aa).

Tudor domains are found at residues 1 to 30, 215 to 279, and 435 to 491; these read MVEV…LREM, YERG…LFDL, and SVTP…AYEL. The tract at residues 564–795 is disordered; it reads SRAEGSFGNS…SKLTPPLSKL (232 aa). Basic and acidic residues predominate over residues 573 to 591; the sequence is SEKRNQLNDLDRGGRKETT. The span at 592–602 shows a compositional bias: polar residues; the sequence is SKFQPYSQGSK. The span at 622 to 631 shows a compositional bias: basic and acidic residues; sequence FQTKEREQFE. 2 stretches are compositionally biased toward polar residues: residues 651 to 660 and 687 to 704; these read VQKNMSQSGF and LYSQ…SSYS. The segment covering 715 to 726 has biased composition (basic and acidic residues); the sequence is RSKERQVSEHKQ. Polar residues-rich tracts occupy residues 746–766 and 774–787; these read KASQ…GSDQ and NASQ…QESK. 2 consecutive Tudor domains span residues 853-910 and 1060-1118; these read YVNL…LLSI and EIEV…IAAI. Disordered stretches follow at residues 1213–1245, 1449–1599, 1655–1682, and 1827–1905; these read IEDN…TPAV, EDFE…TETE, VEDL…SGPV, and ESPA…APSV. Composition is skewed to acidic residues over residues 1491 to 1500 and 1522 to 1535; these read EAEGLEDQDQ and EQAE…DPGT. Positions 1553–1588 are enriched in basic and acidic residues; it reads SQEHKDFPEQEEDRVAEHKNDISEPDLQSKEQKEDL. The segment covering 1663-1673 has biased composition (polar residues); sequence QESQICISGSD. The segment covering 1876-1887 has biased composition (acidic residues); the sequence is FEPETDDMEQME.

In terms of assembly, interacts with FRGY2 (a component of messenger ribonucleoprotein (mRNP) particle) during germ cell development. In terms of tissue distribution, expressed in testis.

It localises to the cytoplasm. Its function is as follows. Tudor domain-containing protein involved in germ cell development, more specifically the formation of chromatoid body (during spermiogenesis), Balbiani body (during oogenesis), germ plasm (upon fertilization), and for proper miRNA expression and spliceosome maturation. Component of cytoplasmic mRNP particle through interaction with FRGY2, and binds to maternal mRNA related to cell cycle (RCC1, RHAMM, INCENP-A, MAD2L1, HELLS) and a germ plasm specific mRNA (Dead end/Dnd1), it is proposed a role in translational activation of the maternal mRNAs repressed in mRNP particle. The protein is Tudor domain-containing 6-like of Xenopus laevis (African clawed frog).